The following is a 392-amino-acid chain: Probable protein phosphatase 2C 29 (392 aa).

The PPM-type phosphatase domain occupies 44–353 (DYSVAVAQAN…DDITVVVLFL (310 aa)). D75, G76, D285, and D344 together coordinate Mn(2+). Positions 360–392 (AGRGDEIDGTDGPVDVFSLSPDDREDPTRPVLR) are disordered.

The protein belongs to the PP2C family. Mg(2+) serves as cofactor. Requires Mn(2+) as cofactor.

It catalyses the reaction O-phospho-L-seryl-[protein] + H2O = L-seryl-[protein] + phosphate. The catalysed reaction is O-phospho-L-threonyl-[protein] + H2O = L-threonyl-[protein] + phosphate. The protein is Probable protein phosphatase 2C 29 of Oryza sativa subsp. japonica (Rice).